A 303-amino-acid chain; its full sequence is MNWITNYVRPRINSMLGRREVPENLWIKCPETGEMVFHKDLEDNKWVIPASGFHMKMPAKARLADLFDKGEYEALQQPKVAQDPLKFRDSKKYTDRLKDSRVKTDQEDTIVAGVGKVRGLKLVAVVHEFNFMGGSLGIAAGEAIVKAFERAIAEKCPLVMFPASGGARMQEGILSLMQLPRTTVAVDMLKEAGQPYIVVLTNPTTGGVTASYAMLGDVHLAEPGAEICFAGKRVIEQTIREKLPEGFQTSEYLLEHGMVDMVVKRHDIPDTLATLLKILTKAPANDVSAKSLNGAAAPLVANG.

The region spanning 25-294 (LWIKCPETGE…NDVSAKSLNG (270 aa)) is the CoA carboxyltransferase N-terminal domain.

Belongs to the AccD/PCCB family. As to quaternary structure, acetyl-CoA carboxylase is a heterohexamer composed of biotin carboxyl carrier protein (AccB), biotin carboxylase (AccC) and two subunits each of ACCase subunit alpha (AccA) and ACCase subunit beta (AccD).

It is found in the cytoplasm. The catalysed reaction is N(6)-carboxybiotinyl-L-lysyl-[protein] + acetyl-CoA = N(6)-biotinyl-L-lysyl-[protein] + malonyl-CoA. Its pathway is lipid metabolism; malonyl-CoA biosynthesis; malonyl-CoA from acetyl-CoA: step 1/1. Component of the acetyl coenzyme A carboxylase (ACC) complex. Biotin carboxylase (BC) catalyzes the carboxylation of biotin on its carrier protein (BCCP) and then the CO(2) group is transferred by the transcarboxylase to acetyl-CoA to form malonyl-CoA. This Rhizobium rhizogenes (strain K84 / ATCC BAA-868) (Agrobacterium radiobacter) protein is Acetyl-coenzyme A carboxylase carboxyl transferase subunit beta.